The sequence spans 149 residues: Protein TraJ (149 aa).

It localises to the cell membrane. In terms of biological role, this protein is essential for positively regulating the expression of transfer genes that are involved in the conjugal transfer of DNA between bacterial cells. The chain is Protein TraJ (traJ) from Escherichia coli.